The following is a 234-amino-acid chain: Meiotically up-regulated gene 35 protein (234 aa).

The segment covering 126 to 156 has biased composition (basic and acidic residues); that stretch reads DSSGDLTSTDKERDVSPVSHSEKPYWDRYDL. The disordered stretch occupies residues 126–176; that stretch reads DSSGDLTSTDKERDVSPVSHSEKPYWDRYDLDQPSNQDVEESRNLVQEPKH. Phosphoserine occurs at positions 127 and 128. Residue Thr132 is modified to Phosphothreonine. The residue at position 141 (Ser141) is a Phosphoserine.

It is found in the cytoplasm. Has a role in meiosis. The chain is Meiotically up-regulated gene 35 protein (mug35) from Schizosaccharomyces pombe (strain 972 / ATCC 24843) (Fission yeast).